A 234-amino-acid chain; its full sequence is UPF0502 protein Reut_B4455 (234 aa).

This sequence belongs to the UPF0502 family.

In Cupriavidus pinatubonensis (strain JMP 134 / LMG 1197) (Cupriavidus necator (strain JMP 134)), this protein is UPF0502 protein Reut_B4455.